Here is a 397-residue protein sequence, read N- to C-terminus: Putative F-box protein At2g04810 (397 aa).

In terms of domain architecture, F-box spans 20–68; it reads SDWSKLCPDVLRKIYETLRSPVDSHRAKIVCSNWYSVWKTCVKRPLCPL.

The protein is Putative F-box protein At2g04810 of Arabidopsis thaliana (Mouse-ear cress).